Here is a 314-residue protein sequence, read N- to C-terminus: tRNA pseudouridine synthase B (314 aa).

Residue His43 participates in substrate binding. Asp48 acts as the Nucleophile in catalysis. Residues Tyr76, Tyr179, and Leu200 each contribute to the substrate site.

Belongs to the pseudouridine synthase TruB family. Type 1 subfamily.

It catalyses the reaction uridine(55) in tRNA = pseudouridine(55) in tRNA. Its function is as follows. Responsible for synthesis of pseudouridine from uracil-55 in the psi GC loop of transfer RNAs. This Citrobacter koseri (strain ATCC BAA-895 / CDC 4225-83 / SGSC4696) protein is tRNA pseudouridine synthase B.